Consider the following 1505-residue polypeptide: Probable serine/threonine-protein kinase irlD (1505 aa).

Over residues 1-18 the composition is skewed to basic residues; it reads MGPKKGKRSHSKNHHHHN. Disordered regions lie at residues 1–30, 121–211, 548–571, and 862–1013; these read MGPKKGKRSHSKNHHHHNNGNNNNNNNSGG, IPQP…NNIL, TTTTTTTTTTTTTTIDKDEKDKEN, and EENE…TIAT. The span at 139 to 158 shows a compositional bias: low complexity; the sequence is SISTTTTTTTATAIEIESSS. Positions 159 to 172 are enriched in polar residues; sequence GLTSNITDSTEIQL. Low complexity-rich tracts occupy residues 173–209 and 548–561; these read DSTTTDTKTTSTTSTTTNNSSDSNNNNNNNNNNNSNN and TTTTTTTTTTTTTT. Composition is skewed to basic and acidic residues over residues 562–571 and 862–882; these read IDKDEKDKEN and EENEKKRLKEKRKKEEKEKKK. The stretch at 846-892 forms a coiled coil; that stretch reads IRTEESLKAEKDLLEQEENEKKRLKEKRKKEEKEKKKQQNLKQKSLI. Residues 896 to 924 are compositionally biased toward low complexity; the sequence is TTTTTTTTPIPITVPIPTQTQTPTQTPTQ. Positions 925 to 943 are enriched in pro residues; that stretch reads TPIPTPIPTTPIPTTPIPI. Composition is skewed to low complexity over residues 944 to 954 and 960 to 977; these read PIQLTPTTPKT and TPKTPTTPKTPITPKTPK. Over residues 978 to 989 the composition is skewed to polar residues; that stretch reads NSTLDKQTISTP. Residues 1054-1324 enclose the Protein kinase domain; the sequence is RKDEFIIGRG…TENILLHPFF (271 aa). ATP contacts are provided by residues 1060 to 1068 and Lys1083; that span reads IGRGSNGTL. The active-site Proton acceptor is the Asp1194. Residues 1327–1505 form the KEN domain; it reads HEKKVKFIDA…LIYFNDLIIK (179 aa).

The protein belongs to the protein kinase superfamily. Ser/Thr protein kinase family.

The enzyme catalyses L-seryl-[protein] + ATP = O-phospho-L-seryl-[protein] + ADP + H(+). It catalyses the reaction L-threonyl-[protein] + ATP = O-phospho-L-threonyl-[protein] + ADP + H(+). This is Probable serine/threonine-protein kinase irlD (irlD) from Dictyostelium discoideum (Social amoeba).